Here is a 188-residue protein sequence, read N- to C-terminus: ATP synthase subunit b (188 aa).

The chain crosses the membrane as a helical span at residues 19–39; it reads VYVLGATIVSFLILFLFITYF.

Belongs to the ATPase B chain family. In terms of assembly, F-type ATPases have 2 components, F(1) - the catalytic core - and F(0) - the membrane proton channel. F(1) has five subunits: alpha(3), beta(3), gamma(1), delta(1), epsilon(1). F(0) has three main subunits: a(1), b(2) and c(10-14). The alpha and beta chains form an alternating ring which encloses part of the gamma chain. F(1) is attached to F(0) by a central stalk formed by the gamma and epsilon chains, while a peripheral stalk is formed by the delta and b chains.

The protein resides in the cell membrane. F(1)F(0) ATP synthase produces ATP from ADP in the presence of a proton or sodium gradient. F-type ATPases consist of two structural domains, F(1) containing the extramembraneous catalytic core and F(0) containing the membrane proton channel, linked together by a central stalk and a peripheral stalk. During catalysis, ATP synthesis in the catalytic domain of F(1) is coupled via a rotary mechanism of the central stalk subunits to proton translocation. In terms of biological role, component of the F(0) channel, it forms part of the peripheral stalk, linking F(1) to F(0). This chain is ATP synthase subunit b, found in Mesomycoplasma hyopneumoniae (strain J / ATCC 25934 / NCTC 10110) (Mycoplasma hyopneumoniae).